Reading from the N-terminus, the 382-residue chain is Polyadenylate-binding protein 5 (382 aa).

RRM domains lie at 18–96, 106–182, 199–276, and 302–378; these read AALY…WSQP, GNIF…RFKF, TNVF…RAQK, and VPIY…LGQA.

It localises to the cytoplasm. In terms of biological role, binds the poly(A) tail of mRNA. May be involved in cytoplasmic regulatory processes of mRNA metabolism. Can probably bind to cytoplasmic RNA sequences other than poly(A) in vivo. This is Polyadenylate-binding protein 5 (PABPC5) from Gorilla gorilla gorilla (Western lowland gorilla).